A 379-amino-acid polypeptide reads, in one-letter code: tRNA-specific 2-thiouridylase MnmA (379 aa).

ATP is bound by residues 9 to 16 (AMSGGVDS) and M35. The interval 94 to 96 (NPD) is interaction with target base in tRNA. C99 functions as the Nucleophile in the catalytic mechanism. C99 and C195 are disulfide-bonded. Residue G123 participates in ATP binding. The interaction with tRNA stretch occupies residues 145–147 (KDQ). The active-site Cysteine persulfide intermediate is the C195. The segment at 307–308 (RY) is interaction with tRNA.

This sequence belongs to the MnmA/TRMU family.

The protein resides in the cytoplasm. It catalyses the reaction S-sulfanyl-L-cysteinyl-[protein] + uridine(34) in tRNA + AH2 + ATP = 2-thiouridine(34) in tRNA + L-cysteinyl-[protein] + A + AMP + diphosphate + H(+). Catalyzes the 2-thiolation of uridine at the wobble position (U34) of tRNA, leading to the formation of s(2)U34. In Xylella fastidiosa (strain M23), this protein is tRNA-specific 2-thiouridylase MnmA.